The chain runs to 189 residues: Casparian strip membrane protein 1 (189 aa).

Topologically, residues 1–42 are cytoplasmic; that stretch reads MEKNESSAIEIAESSKERKGKAPLLAAAVGHDRAAGYKRGVS. The helical transmembrane segment at 43-63 threads the bilayer; sequence IFDLILRISAATAALAATIVM. At 64–90 the chain is on the extracellular side; the sequence is GTTEQTLPFFTQFFQFRAQYDDLPTFT. The helical transmembrane segment at 91 to 111 threads the bilayer; sequence FFVVGMAIVTGYLILSVPLSI. Residues 112 to 130 are Cytoplasmic-facing; that stretch reads VCIARPVAIGPRFLLIVCD. Residues 131-151 form a helical membrane-spanning segment; sequence TVTAVLATSAAGSSAAIVYLA. The Extracellular segment spans residues 152 to 189; sequence HNGNSDANWLAICQQFNDFCQRVSGAVVAAFVAVVCSS.

Belongs to the Casparian strip membrane proteins (CASP) family. In terms of assembly, homodimer and heterodimers.

The protein resides in the cell membrane. Functionally, regulates membrane-cell wall junctions and localized cell wall deposition. Required for establishment of the Casparian strip membrane domain (CSD) and the subsequent formation of Casparian strips, a cell wall modification of the root endodermis that determines an apoplastic barrier between the intraorganismal apoplasm and the extraorganismal apoplasm and prevents lateral diffusion. The protein is Casparian strip membrane protein 1 of Striga asiatica (Asiatic witchweed).